We begin with the raw amino-acid sequence, 464 residues long: MLATDSDPIVAIATAAGRGGIGVVRVSFGRGGEAAALPLIDALCGQKLAPRHASYVPFLDAHGAPLDRGIALYFPAPHSYTGEHVLELQGHGGPIVMQLLLQRCLDAGRGFGLRLAEPGEFTRRAFLNDKLDLAQAEAVADLIEASTEAAARSAGRSLDGAFSRQIHALVDDVITLRMLVEATLDFPEEEIDFLEAADARGKLAKIRAQLAHVLGDARQGALLREGLSVVLAGQPNVGKSSLLNALAGAELAIVTPIAGTTRDKVAQTIQVEGIPLHIIDTAGLRETEDEVERIGIARTWSEIERADVVLHLLDSRTGMTPDDETIAARFPAGVPVVRVLNKTDLTGVPACVEHPAAEGDLTEVHLSAKRGDGIDMLRAELLRIAGWQAGAEGVYLARERHLIALRAAQEHLAQAADHAEQRAQSLDLFAEELRLAQEQLNAITGEFTSDDLLGVIFSRFCIGK.

The (6S)-5-formyl-5,6,7,8-tetrahydrofolate site is built by Arg-25, Glu-87, and Lys-130. A TrmE-type G domain is found at 226-386 (GLSVVLAGQP…LRAELLRIAG (161 aa)). A K(+)-binding site is contributed by Asn-236. Residues 236–241 (NVGKSS), 255–261 (TPIAGTT), and 280–283 (DTAG) each bind GTP. Ser-240 contributes to the Mg(2+) binding site. The K(+) site is built by Thr-255, Ile-257, and Thr-260. Thr-261 contacts Mg(2+). Lys-464 is a binding site for (6S)-5-formyl-5,6,7,8-tetrahydrofolate.

Belongs to the TRAFAC class TrmE-Era-EngA-EngB-Septin-like GTPase superfamily. TrmE GTPase family. In terms of assembly, homodimer. Heterotetramer of two MnmE and two MnmG subunits. Requires K(+) as cofactor.

Its subcellular location is the cytoplasm. In terms of biological role, exhibits a very high intrinsic GTPase hydrolysis rate. Involved in the addition of a carboxymethylaminomethyl (cmnm) group at the wobble position (U34) of certain tRNAs, forming tRNA-cmnm(5)s(2)U34. The sequence is that of tRNA modification GTPase MnmE from Burkholderia orbicola (strain MC0-3).